The following is a 416-amino-acid chain: Serine hydroxymethyltransferase 1 (416 aa).

Residues Leu121 and 125–127 each bind (6S)-5,6,7,8-tetrahydrofolate; that span reads GHL. Lys229 is modified (N6-(pyridoxal phosphate)lysine). (6S)-5,6,7,8-tetrahydrofolate is bound by residues Glu245 and 354–356; that span reads SPF.

Belongs to the SHMT family. Homodimer. Pyridoxal 5'-phosphate is required as a cofactor.

It is found in the cytoplasm. It carries out the reaction (6R)-5,10-methylene-5,6,7,8-tetrahydrofolate + glycine + H2O = (6S)-5,6,7,8-tetrahydrofolate + L-serine. It participates in one-carbon metabolism; tetrahydrofolate interconversion. The protein operates within amino-acid biosynthesis; glycine biosynthesis; glycine from L-serine: step 1/1. Catalyzes the reversible interconversion of serine and glycine with tetrahydrofolate (THF) serving as the one-carbon carrier. This reaction serves as the major source of one-carbon groups required for the biosynthesis of purines, thymidylate, methionine, and other important biomolecules. Also exhibits THF-independent aldolase activity toward beta-hydroxyamino acids, producing glycine and aldehydes, via a retro-aldol mechanism. In Vibrio cholerae serotype O1 (strain ATCC 39315 / El Tor Inaba N16961), this protein is Serine hydroxymethyltransferase 1.